The chain runs to 117 residues: Putative cysteine proteinase inhibitor 7 (117 aa).

The N-terminal stretch at 1–24 (MTMRTSSLLLAAVAVVAIVAGATA) is a signal peptide. Positions 28–84 (GSWEPVDINDPHVQELGRWAVAEEDRGVAAGGLTFERVTDGEKQVVAGVNYRLTLEA) constitute a Cystatin domain. The Secondary area of contact signature appears at 71–75 (QVVAG).

It belongs to the cystatin family. Phytocystatin subfamily.

The protein localises to the secreted. Functionally, specific inhibitor of cysteine proteinases. Probably involved in the regulation of endogenous processes and in defense against pests and pathogens. The protein is Putative cysteine proteinase inhibitor 7 of Oryza sativa subsp. japonica (Rice).